The sequence spans 148 residues: Arginine repressor (148 aa).

It belongs to the ArgR family.

It is found in the cytoplasm. The protein operates within amino-acid biosynthesis; L-arginine biosynthesis [regulation]. Functionally, regulates arginine biosynthesis genes. The chain is Arginine repressor from Acidobacterium capsulatum (strain ATCC 51196 / DSM 11244 / BCRC 80197 / JCM 7670 / NBRC 15755 / NCIMB 13165 / 161).